A 171-amino-acid polypeptide reads, in one-letter code: MNLQQQLAYCQQHQQRLQLRHFDNETAWQLGEKIKRQAEKQGVALAIDITVNHQTLFSYAMAGTCAENQDWLRRKRNVVELLSTSSYAAGLMLQQRETSLDARYGVSLRDYAALGGAFPLQIKQAGIIGSVNVSGAPHLDDHNLLLQVLADFVGLPTGSIELLTPLTPLSA.

Belongs to the UPF0303 family.

The polypeptide is UPF0303 protein YPN_2129 (Yersinia pestis bv. Antiqua (strain Nepal516)).